The sequence spans 159 residues: Protein-export protein SecB (159 aa).

It belongs to the SecB family. In terms of assembly, homotetramer, a dimer of dimers. One homotetramer interacts with 1 SecA dimer.

The protein resides in the cytoplasm. In terms of biological role, one of the proteins required for the normal export of preproteins out of the cell cytoplasm. It is a molecular chaperone that binds to a subset of precursor proteins, maintaining them in a translocation-competent state. It also specifically binds to its receptor SecA. This chain is Protein-export protein SecB, found in Nitrosospira multiformis (strain ATCC 25196 / NCIMB 11849 / C 71).